The sequence spans 199 residues: MTRLLGYVDPLDPSFVAAVITITFNPLYWNVVARWEHKTRKLSRAFGSPYLACYSLSVTILLLNFLRSHCFTQAMLSQPRMESLDTPAAYSLGLALLGLGVVLVLSSFFALGFAGTFLGDYFGILKEARVTVFPFNILDNPMYWGSTANYLGWAIMHASPTGLLLTVLVALTYIVALLYEEPFTAEIYRQKASGSHKRS.

The Lumenal portion of the chain corresponds to methionine 1–aspartate 12. An intramembrane region (helical) is located at residues proline 13–alanine 33. Over arginine 34–alanine 45 the chain is Lumenal. Residues phenylalanine 46–leucine 66 traverse the membrane as a helical segment. Residues arginine 67–glycine 93 are Cytoplasmic-facing. Residues leucine 94 to alanine 114 traverse the membrane as a helical segment. Position 98–100 (glycine 98–glycine 100) interacts with S-adenosyl-L-methionine. The Lumenal portion of the chain corresponds to glycine 115 to histidine 157. A helical membrane pass occupies residues alanine 158 to leucine 178. Over tyrosine 179 to serine 199 the chain is Cytoplasmic. Residue glutamate 180–glutamate 181 participates in S-adenosyl-L-methionine binding.

It belongs to the class VI-like SAM-binding methyltransferase superfamily. PEMT/PEM2 methyltransferase family. In terms of processing, isoform 2 is N-glycosylated with high-mannose oligosaccharides. In terms of tissue distribution, primarily expressed in liver (at protein level).

The protein localises to the endoplasmic reticulum. Its subcellular location is the endoplasmic reticulum membrane. The protein resides in the mitochondrion membrane. It catalyses the reaction a 1,2-diacyl-sn-glycero-3-phospho-N-methylethanolamine + S-adenosyl-L-methionine = a 1,2-diacyl-sn-glycero-3-phospho-N,N-dimethylethanolamine + S-adenosyl-L-homocysteine + H(+). It carries out the reaction a 1,2-diacyl-sn-glycero-3-phospho-N,N-dimethylethanolamine + S-adenosyl-L-methionine = a 1,2-diacyl-sn-glycero-3-phosphocholine + S-adenosyl-L-homocysteine + H(+). The enzyme catalyses a 1,2-diacyl-sn-glycero-3-phosphoethanolamine + S-adenosyl-L-methionine = a 1,2-diacyl-sn-glycero-3-phospho-N-methylethanolamine + S-adenosyl-L-homocysteine + H(+). The catalysed reaction is 1,2-di-(9Z-octadecenoyl)-sn-glycero-3-phosphoethanolamine + S-adenosyl-L-methionine = 1,2-di-(9Z-octadecenoyl)-sn-glycero-3-phospho-N-methylethanolamine + S-adenosyl-L-homocysteine + H(+). It catalyses the reaction 1,2-di-(9Z-octadecenoyl)-sn-glycero-3-phospho-N-methylethanolamine + S-adenosyl-L-methionine = 1,2-di-(9Z-octadecenoyl)-sn-glycero-3-phospho-N,N-dimethylethanolamine + S-adenosyl-L-homocysteine + H(+). It carries out the reaction 1,2-di-(9Z-octadecenoyl)-sn-glycero-3-phospho-N,N-dimethylethanolamine + S-adenosyl-L-methionine = 1,2-di-(9Z-octadecenoyl)-sn-glycero-3-phosphocholine + S-adenosyl-L-homocysteine + H(+). The enzyme catalyses 1,2-di-(9Z,12Z-octadecadienoyl)-sn-glycero-3-phosphoethanolamine + S-adenosyl-L-methionine = 1,2-di-(9Z,12Z-octadecadienoyl)-sn-glycero-3-phospho-N-methylethanolamine + S-adenosyl-L-homocysteine + H(+). The catalysed reaction is 1,2-di-(9Z,12Z-octadecadienoyl)-sn-glycero-3-phospho-N-methylethanolamine + S-adenosyl-L-methionine = 1,2-di-(9Z,12Z-octadecadienoyl)-sn-glycero-3-phospho-N,N-dimethylethanolamine + S-adenosyl-L-homocysteine + H(+). It catalyses the reaction 1,2-di-(9Z,12Z-octadecadienoyl)-sn-glycero-3-phospho-N,N-dimethylethanolamine + S-adenosyl-L-methionine = 1,2-di-(9Z,12Z-octadecadienoyl)-sn-glycero-3-phosphocholine + S-adenosyl-L-homocysteine + H(+). It carries out the reaction 1,2-di-(9Z,12Z,15Z-octadecatrienoyl)-sn-glycero-3-phosphoethanolamine + S-adenosyl-L-methionine = 1,2-di-(9Z,12Z,15Z-octadecatrienoyl)-sn-glycero-3-phospho-N-methylethanolamine + S-adenosyl-L-homocysteine + H(+). The enzyme catalyses 1,2-di-(9Z,12Z,15Z-octadecatrienoyl)-sn-glycero-3-phospho-N-methylethanolamine + S-adenosyl-L-methionine = 1,2-di-(9Z,12Z,15Z-octadecatrienoyl)-sn-glycero-3-phospho-N,N-dimethylethanolamine + S-adenosyl-L-homocysteine + H(+). The catalysed reaction is 1,2-di-(9Z,12Z,15Z-octadecatrienoyl)-sn-glycero-3-phospho-N,N-dimethylethanolamine + S-adenosyl-L-methionine = 1,2-di-(9Z,12Z,15Z-octadecatrienoyl)-sn-glycero-3-phosphocholine + S-adenosyl-L-homocysteine + H(+). It catalyses the reaction 1-hexadecanoyl-2-(4Z,7Z,10Z,13Z,16Z,19Z-docosahexaenoyl)-sn-glycero-3-phosphoethanolamine + S-adenosyl-L-methionine = 1-hexadecanoyl-2-(4Z,7Z,10Z,13Z,16Z,19Z-docosahexaenoyl)-sn-glycero-3-phospho-N-methylethanolamine + S-adenosyl-L-homocysteine + H(+). It carries out the reaction 1-hexadecanoyl-2-(4Z,7Z,10Z,13Z,16Z,19Z-docosahexaenoyl)-sn-glycero-3-phospho-N-methylethanolamine + S-adenosyl-L-methionine = 1-hexadecanoyl-2-(4Z,7Z,10Z,13Z,16Z,19Z-docosahexaenoyl)-sn-glycero-3-phospho-N,N-dimethylethanolamine + S-adenosyl-L-homocysteine + H(+). The enzyme catalyses 1-hexadecanoyl-2-(4Z,7Z,10Z,13Z,16Z,19Z-docosahexaenoyl)-sn-glycero-3-phospho-N,N-dimethylethanolamine + S-adenosyl-L-methionine = 1-hexadecanoyl-2-(4Z,7Z,10Z,13Z,16Z,19Z-docosahexaenoyl)-sn-glycero-3-phosphocholine + S-adenosyl-L-homocysteine + H(+). It participates in phospholipid metabolism; phosphatidylcholine biosynthesis. The first methylation is rate-limiting. Catalyzes the three sequential steps of the methylation pathway for the biosynthesis of phosphatidylcholine, a critical and essential component for membrane structure. Uses S-adenosylmethionine (S-adenosyl-L-methionine, SAM or AdoMet) as the methyl group donor for the methylation of phosphatidylethanolamine (1,2-diacyl-sn-glycero-3-phosphoethanolamine, PE) to phosphatidylmonomethylethanolamine (1,2-diacyl-sn-glycero-3-phospho-N-methylethanolamine, PMME), PMME to phosphatidyldimethylethanolamine (1,2-diacyl-sn-glycero-3-phospho-N,N-dimethylethanolamine, PDME), and PDME to phosphatidylcholine (1,2-diacyl-sn-glycero-3-phosphocholine, PC), producing S-adenosyl-L-homocysteine in each step. Responsible for approximately 30% of hepatic PC with the CDP-choline pathway accounting for the other 70%. Its function is as follows. Catalyzes the three sequential steps of the methylation of 1,2-diacyl-sn-glycero-3-phospho-N-methylethanolamine (PMME) to 1,2-diacyl-sn-glycero-3-phospho-N,N-dimethylethanolamine (PDME) more efficiently than isoform 2. Induces increase in PC species with longer polyunsaturated chains than isoform 2. In terms of biological role, produces a higher increase in the level of PC species containing long chains with three double bonds than isoform 1. The sequence is that of Phosphatidylethanolamine N-methyltransferase from Homo sapiens (Human).